We begin with the raw amino-acid sequence, 206 residues long: Musculin (206 aa).

A disordered region spans residues 1–115 (MSTGSVSDPE…QSQRNAANAR (115 aa)). A compositionally biased stretch (acidic residues) spans 46–56 (SAEEEDPDGEE). The Nuclear localization signal signature appears at 71-76 (KRKRPR). Over residues 78–92 (AGGGGAGGSAGGGGK) the composition is skewed to gly residues. A compositionally biased stretch (low complexity) spans 93–102 (KPLPAKGSAA). The bHLH domain occupies 107-159 (SQRNAANARERARMRVLSKAFSRLKTSLPWVPPDTKLSKLDTLRLASSYIAHL).

Efficient DNA binding requires dimerization with another bHLH protein. Binds DNA as a homodimer or a heterodimer. Forms a heterodimer with TCF3. In terms of tissue distribution, expressed in lymphoid tissues, B-cell lines and activated B-cells.

The protein resides in the nucleus. Its function is as follows. Transcription repressor capable of inhibiting the transactivation capability of TCF3/E47. May play a role in regulating antigen-dependent B-cell differentiation. This chain is Musculin (MSC), found in Homo sapiens (Human).